The sequence spans 388 residues: Succinate--CoA ligase [ADP-forming] subunit beta (388 aa).

Residues 9–244 enclose the ATP-grasp domain; it reads KSLFAEYGLP…PSQDDAREAH (236 aa). ATP-binding positions include K46, 53–55, E99, T102, and E107; that span reads GRG. The Mg(2+) site is built by N199 and D213. Residues N264 and 321–323 each bind substrate; that span reads GIV.

This sequence belongs to the succinate/malate CoA ligase beta subunit family. In terms of assembly, heterotetramer of two alpha and two beta subunits. It depends on Mg(2+) as a cofactor.

It catalyses the reaction succinate + ATP + CoA = succinyl-CoA + ADP + phosphate. The catalysed reaction is GTP + succinate + CoA = succinyl-CoA + GDP + phosphate. It participates in carbohydrate metabolism; tricarboxylic acid cycle; succinate from succinyl-CoA (ligase route): step 1/1. In terms of biological role, succinyl-CoA synthetase functions in the citric acid cycle (TCA), coupling the hydrolysis of succinyl-CoA to the synthesis of either ATP or GTP and thus represents the only step of substrate-level phosphorylation in the TCA. The beta subunit provides nucleotide specificity of the enzyme and binds the substrate succinate, while the binding sites for coenzyme A and phosphate are found in the alpha subunit. This Shewanella baltica (strain OS195) protein is Succinate--CoA ligase [ADP-forming] subunit beta.